The chain runs to 100 residues: Urease subunit gamma (100 aa).

The protein belongs to the urease gamma subunit family. In terms of assembly, heterotrimer of UreA (gamma), UreB (beta) and UreC (alpha) subunits. Three heterotrimers associate to form the active enzyme.

The protein resides in the cytoplasm. The catalysed reaction is urea + 2 H2O + H(+) = hydrogencarbonate + 2 NH4(+). Its pathway is nitrogen metabolism; urea degradation; CO(2) and NH(3) from urea (urease route): step 1/1. The sequence is that of Urease subunit gamma from Prochlorococcus marinus (strain MIT 9215).